A 715-amino-acid chain; its full sequence is Fatty acid oxidation complex subunit alpha (715 aa).

Residues 1–190 (MIYEGKAITV…KVGAVDAVVA (190 aa)) form an enoyl-CoA hydratase/isomerase region. Asp-297 lines the substrate pocket. The 3-hydroxyacyl-CoA dehydrogenase stretch occupies residues 312 to 715 (KDVKQAAVLG…MAKNGQSFFG (404 aa)). Residues Met-325, Asp-344, 401-403 (VVE), Lys-408, and Ser-430 contribute to the NAD(+) site. Catalysis depends on His-451, which acts as the For 3-hydroxyacyl-CoA dehydrogenase activity. An NAD(+)-binding site is contributed by Asn-454. The substrate site is built by Asn-501 and Tyr-660.

This sequence in the N-terminal section; belongs to the enoyl-CoA hydratase/isomerase family. It in the C-terminal section; belongs to the 3-hydroxyacyl-CoA dehydrogenase family. Heterotetramer of two alpha chains (FadB) and two beta chains (FadA).

The enzyme catalyses a (3S)-3-hydroxyacyl-CoA + NAD(+) = a 3-oxoacyl-CoA + NADH + H(+). The catalysed reaction is a (3S)-3-hydroxyacyl-CoA = a (2E)-enoyl-CoA + H2O. It catalyses the reaction a 4-saturated-(3S)-3-hydroxyacyl-CoA = a (3E)-enoyl-CoA + H2O. It carries out the reaction (3S)-3-hydroxybutanoyl-CoA = (3R)-3-hydroxybutanoyl-CoA. The enzyme catalyses a (3Z)-enoyl-CoA = a 4-saturated (2E)-enoyl-CoA. The catalysed reaction is a (3E)-enoyl-CoA = a 4-saturated (2E)-enoyl-CoA. Its pathway is lipid metabolism; fatty acid beta-oxidation. Involved in the aerobic and anaerobic degradation of long-chain fatty acids via beta-oxidation cycle. Catalyzes the formation of 3-oxoacyl-CoA from enoyl-CoA via L-3-hydroxyacyl-CoA. It can also use D-3-hydroxyacyl-CoA and cis-3-enoyl-CoA as substrate. The chain is Fatty acid oxidation complex subunit alpha from Pseudomonas fluorescens (strain ATCC BAA-477 / NRRL B-23932 / Pf-5).